The following is a 123-amino-acid chain: MPTIKQLIRNPRQPIRNVTKSPALRGCPQRRGTCTRVYTITPKKPNSALRKVARVRLTSGFEITAYIPGIGHNSQEHSVVLVRGGRVKDLPGVRYHIVRGTLDAVGVKDRQQGRSKYGVKKPK.

The protein belongs to the universal ribosomal protein uS12 family. Part of the 30S ribosomal subunit.

The protein localises to the plastid. It localises to the chloroplast. Its function is as follows. With S4 and S5 plays an important role in translational accuracy. Located at the interface of the 30S and 50S subunits. The sequence is that of Small ribosomal subunit protein uS12cz/uS12cy (rps12-A) from Citrus sinensis (Sweet orange).